Reading from the N-terminus, the 760-residue chain is Protein HEADING DATE 3B (760 aa).

2 stretches are compositionally biased toward gly residues: residues 1-12 and 60-70; these read MATRGGGGGGGG and SGGGGGGGVGG. 4 disordered regions span residues 1–120, 144–169, 236–262, and 285–346; these read MATR…KINK, SRST…RLAD, VKSR…EKSS, and TGII…IEET. The segment covering 71–87 has biased composition (low complexity); sequence SPAHSTSAASQSQSQSQ. The span at 94 to 107 shows a compositional bias: polar residues; that stretch reads SLFQPFNVPSNRPG. The span at 108–120 shows a compositional bias: basic and acidic residues; sequence HSTEKINSDKINK. A compositionally biased stretch (basic and acidic residues) spans 236–248; it reads VKSRTPLKDKEME. A Nuclear localization signal motif is present at residues 349–355; it reads KRKRLLE. Disordered regions lie at residues 485–543 and 707–760; these read LQQP…GVQL and FPTV…QRDD. Polar residues-rich tracts occupy residues 511-522, 531-543, and 707-730; these read QRDQAATNGVSK, ASDN…GVQL, and FPTV…QTNV.

Expressed in mesophyll cells of young leaves, anthers, stigmas and the top of lemmas.

It is found in the nucleus. Involved in the regulation of flowering time under short day (SD) and long day (LD) conditions. Functions as a floral promoter by negatively regulating GHD7, a repressor of the photoperiodic control of flowering. Acts as a floral activator in the LD photoperiodic pathway. Involved in blue light-induced activation of EHD1 expression to promote flowering under SD conditions. This is Protein HEADING DATE 3B (HD3B) from Oryza sativa subsp. japonica (Rice).